The following is an 864-amino-acid chain: Protein translocase subunit SecA (864 aa).

ATP is bound by residues Q87, 105-109, and D512; that span reads GEGKT.

This sequence belongs to the SecA family. Monomer and homodimer. Part of the essential Sec protein translocation apparatus which comprises SecA, SecYEG and auxiliary proteins SecDF-YajC and YidC.

Its subcellular location is the cell inner membrane. The protein resides in the cytoplasm. The catalysed reaction is ATP + H2O + cellular proteinSide 1 = ADP + phosphate + cellular proteinSide 2.. Part of the Sec protein translocase complex. Interacts with the SecYEG preprotein conducting channel. Has a central role in coupling the hydrolysis of ATP to the transfer of proteins into and across the cell membrane, serving as an ATP-driven molecular motor driving the stepwise translocation of polypeptide chains across the membrane. The protein is Protein translocase subunit SecA of Buchnera aphidicola subsp. Cinara cedri (strain Cc).